Reading from the N-terminus, the 637-residue chain is Chaperone protein HtpG (637 aa).

The segment at 1–345 is a; substrate-binding; it reads MSQQETHGFQ…SNDLPLNVSR (345 aa). Positions 346-562 are b; that stretch reads EILQDNQVTT…EGEMSTQMIK (217 aa). A c region spans residues 563 to 637; that stretch reads LMQAAGQPVP…TNQMLLASVK (75 aa).

The protein belongs to the heat shock protein 90 family. In terms of assembly, homodimer.

It localises to the cytoplasm. Its function is as follows. Molecular chaperone. Has ATPase activity. The sequence is that of Chaperone protein HtpG from Shewanella frigidimarina (strain NCIMB 400).